Consider the following 305-residue polypeptide: NK1 transcription factor-related protein 2 (305 aa).

Disordered regions lie at residues Glu-51–Arg-158 and Lys-210–Leu-257. Over residues Ser-87–Glu-96 the composition is skewed to acidic residues. Over residues Asp-97–Pro-115 the composition is skewed to basic and acidic residues. Residues Ala-129–Gly-140 are compositionally biased toward low complexity. Residues Pro-156–Asn-215 constitute a DNA-binding region (homeobox).

Belongs to the NK-1 homeobox family. In terms of assembly, interacts (via the homeodomain) with HIPK1, HIPK2, and HIPK3. In terms of processing, phosphorylated by HIPK2 in vitro. Expression detected in the brain, testis and spleen. In the testis, expressed in the germ cells of the seminiferous epithelium, predominantly in elongating spermatids and spermatozoa. Expressed throughout the brain with highest levels in regions of the cerebral cortex, hippocampus, diencephalon, pons, medulla and cerebellum.

Its subcellular location is the nucleus. It localises to the nucleolus. Its function is as follows. Transcriptional repressor. May play a role in early development as a Wnt/beta-catenin effector, hence controlling pluripotency and preimplantation development of embryonic stem cells. May promote adipogenesis in mesenchymal stem cells, possibly by inhibiting the expression of the antiadipogenic factor NR2F2. May inhibit osteoblastogenic differentiation. This Mus musculus (Mouse) protein is NK1 transcription factor-related protein 2 (Nkx1-2).